The primary structure comprises 572 residues: Proline--tRNA ligase (572 aa).

It belongs to the class-II aminoacyl-tRNA synthetase family. ProS type 1 subfamily. In terms of assembly, homodimer.

Its subcellular location is the cytoplasm. It catalyses the reaction tRNA(Pro) + L-proline + ATP = L-prolyl-tRNA(Pro) + AMP + diphosphate. Functionally, catalyzes the attachment of proline to tRNA(Pro) in a two-step reaction: proline is first activated by ATP to form Pro-AMP and then transferred to the acceptor end of tRNA(Pro). As ProRS can inadvertently accommodate and process non-cognate amino acids such as alanine and cysteine, to avoid such errors it has two additional distinct editing activities against alanine. One activity is designated as 'pretransfer' editing and involves the tRNA(Pro)-independent hydrolysis of activated Ala-AMP. The other activity is designated 'posttransfer' editing and involves deacylation of mischarged Ala-tRNA(Pro). The misacylated Cys-tRNA(Pro) is not edited by ProRS. The sequence is that of Proline--tRNA ligase from Escherichia coli O139:H28 (strain E24377A / ETEC).